The primary structure comprises 390 residues: Chorismate synthase 2 (390 aa).

2 residues coordinate NADP(+): arginine 39 and arginine 45. FMN-binding positions include 132–134 (RSS), 253–254 (NA), glycine 298, 313–317 (KPIPT), and arginine 339.

Belongs to the chorismate synthase family. Homotetramer. It depends on FMNH2 as a cofactor.

It catalyses the reaction 5-O-(1-carboxyvinyl)-3-phosphoshikimate = chorismate + phosphate. Its pathway is metabolic intermediate biosynthesis; chorismate biosynthesis; chorismate from D-erythrose 4-phosphate and phosphoenolpyruvate: step 7/7. Functionally, catalyzes the anti-1,4-elimination of the C-3 phosphate and the C-6 proR hydrogen from 5-enolpyruvylshikimate-3-phosphate (EPSP) to yield chorismate, which is the branch point compound that serves as the starting substrate for the three terminal pathways of aromatic amino acid biosynthesis. This reaction introduces a second double bond into the aromatic ring system. The polypeptide is Chorismate synthase 2 (Bacillus cereus (strain ZK / E33L)).